The sequence spans 20 residues: 23 kDa cell wall protein (20 aa).

It is found in the secreted. The protein localises to the cell wall. This Arabidopsis thaliana (Mouse-ear cress) protein is 23 kDa cell wall protein.